The primary structure comprises 328 residues: Thiamine thiazole synthase (328 aa).

Residues A87, 108–109 (EA), G116, and V181 contribute to the substrate site. C215 carries the 2,3-didehydroalanine (Cys) modification. Residues D217, H232, M284, and 294–296 (RMG) each bind substrate.

It belongs to the THI4 family. Homooctamer. It depends on Fe cation as a cofactor. Post-translationally, during the catalytic reaction, a sulfide is transferred from Cys-215 to a reaction intermediate, generating a dehydroalanine residue.

Its subcellular location is the cytoplasm. The protein localises to the nucleus. It catalyses the reaction [ADP-thiazole synthase]-L-cysteine + glycine + NAD(+) = [ADP-thiazole synthase]-dehydroalanine + ADP-5-ethyl-4-methylthiazole-2-carboxylate + nicotinamide + 3 H2O + 2 H(+). Involved in biosynthesis of the thiamine precursor thiazole. Catalyzes the conversion of NAD and glycine to adenosine diphosphate 5-(2-hydroxyethyl)-4-methylthiazole-2-carboxylic acid (ADT), an adenylated thiazole intermediate. The reaction includes an iron-dependent sulfide transfer from a conserved cysteine residue of the protein to a thiazole intermediate. The enzyme can only undergo a single turnover, which suggests it is a suicide enzyme. May have additional roles in adaptation to various stress conditions and in DNA damage tolerance. This Schizosaccharomyces pombe (strain 972 / ATCC 24843) (Fission yeast) protein is Thiamine thiazole synthase (thi2).